Consider the following 78-residue polypeptide: MAKAEIRKPKPKQNPLKAADVTEIDYKDVALLRKFISDRGKIRARRVTGVSVQEQRKIAQAIKNAREVALLPYSGAGR.

The protein belongs to the bacterial ribosomal protein bS18 family. As to quaternary structure, part of the 30S ribosomal subunit. Forms a tight heterodimer with protein bS6.

Binds as a heterodimer with protein bS6 to the central domain of the 16S rRNA, where it helps stabilize the platform of the 30S subunit. The protein is Small ribosomal subunit protein bS18 of Kocuria rhizophila (strain ATCC 9341 / DSM 348 / NBRC 103217 / DC2201).